A 106-amino-acid polypeptide reads, in one-letter code: Small ribosomal subunit protein uS17 (106 aa).

It belongs to the universal ribosomal protein uS17 family. Part of the 30S ribosomal subunit.

Its function is as follows. One of the primary rRNA binding proteins, it binds specifically to the 5'-end of 16S ribosomal RNA. The chain is Small ribosomal subunit protein uS17 from Picrophilus torridus (strain ATCC 700027 / DSM 9790 / JCM 10055 / NBRC 100828 / KAW 2/3).